Reading from the N-terminus, the 483-residue chain is Beta-glucosidase 4 (483 aa).

A beta-D-glucoside-binding positions include Gln-29, His-131, 176–177, Tyr-310, and Glu-380; that span reads NE. Glu-177 acts as the Proton donor in catalysis. The active-site Nucleophile is the Glu-380. N-linked (GlcNAc...) asparagine glycosylation occurs at Asn-398. A beta-D-glucoside-binding positions include Trp-429, 436–437, and Phe-445; that span reads EW.

The protein belongs to the glycosyl hydrolase 1 family.

It carries out the reaction Hydrolysis of terminal, non-reducing beta-D-glucosyl residues with release of beta-D-glucose.. The sequence is that of Beta-glucosidase 4 (BGLU4) from Oryza sativa subsp. japonica (Rice).